Here is a 423-residue protein sequence, read N- to C-terminus: MSATHPTRLGTRTKESNACASQGLVRKPPWANEGEGFELHFWRKICRNCNVVKKSMTVLLSNEEDRKVGRLFEDTKYTTLIAKLKSDGIPMYKRNVMILTNPVAAKKNVSINTVTYEWAPPVQNQALARQYMQMLPKEKQPVAGSEGAQYRKKQLAKQLPAHDQDPSKCHELSPKEVKEMEQFVKKYKSEALGVGDVKFPSEMNAQGDKVHNCGNRHAPAAVASKDKSAESKKTQYSCYCCKHTTNEGEPAIYAERAGYDKLWHPACFICSTCGELLVDMIYFWKNGKLYCGRHYCDSEKPRCAGCDELIFSNEYTQAENQNWHLKHFCCFDCDHILAGKIYVMVTDKPVCKPCYVKNHAVVCQGCHNAIDPEVQRVTYNNFSWHASTECFLCSCCSKCLIGQKFMPVEGMVFCSVECKRMMS.

Disordered stretches follow at residues 1–21 (MSATHPTRLGTRTKESNACAS) and 138–169 (EKQPVAGSEGAQYRKKQLAKQLPAHDQDPSKC). Residues 97 to 204 (MILTNPVAAK…GDVKFPSEMN (108 aa)) form the PET domain. Residues 160-169 (PAHDQDPSKC) show a composition bias toward basic and acidic residues. LIM zinc-binding domains lie at 236 to 299 (YSCY…CDSE), 301 to 361 (PRCA…NHAV), and 364 to 423 (QGCH…RMMS).

The protein belongs to the prickle / espinas / testin family. In terms of assembly, interacts via LIM domain 1 with ZYX. Interacts (via LIM domain 3) with ENAH and VASP. Interacts with ALKBH4, talin, actin, alpha-actinin, GRIP1 and PXN. Interacts (via LIM domain 2) with ACTL7A (via N-terminus). Heterodimer with ACTL7A; the heterodimer interacts with ENAH to form a heterotrimer. Detected at the acrosome of round spermatids (at protein level). Isoform TES1 transcript is highly expressed in adult testis and detected at low levels in other tissues. Isoform TES2 transcript is highly expressed in testis, kidney and spleen; intermediate in thymus, submaxillary gland and lung; detected at low levels in other tissues.

It is found in the cytoplasm. It localises to the cell junction. Its subcellular location is the focal adhesion. Its function is as follows. Scaffold protein that may play a role in cell adhesion, cell spreading and in the reorganization of the actin cytoskeleton. Plays a role in the regulation of cell proliferation. May act as a tumor suppressor. The chain is Testin (Tes) from Mus musculus (Mouse).